The sequence spans 124 residues: uncharacterized protein (124 aa).

The tract at residues 82-124 is disordered; that stretch reads SDLGIEGGERAQGQNAHSVHGPGLQTERGGSQLQMVGHPLREL.

This is an uncharacterized protein from Human cytomegalovirus (strain AD169) (HHV-5).